The sequence spans 489 residues: Endoglucanase 4 (489 aa).

The N-terminal stretch at 1–25 is a signal peptide; that stretch reads MAGKSFMTPAIMLAMLLLISPETYA. The active-site Nucleophile is aspartate 81. Histidine 409 is a catalytic residue. Asparagine 453 carries N-linked (GlcNAc...) asparagine glycosylation. Residues aspartate 460 and glutamate 469 contribute to the active site.

This sequence belongs to the glycosyl hydrolase 9 (cellulase E) family.

The protein resides in the secreted. It carries out the reaction Endohydrolysis of (1-&gt;4)-beta-D-glucosidic linkages in cellulose, lichenin and cereal beta-D-glucans.. In Arabidopsis thaliana (Mouse-ear cress), this protein is Endoglucanase 4.